Reading from the N-terminus, the 188-residue chain is MYNILKKSFYKQKSLDVASSLLGKMLLFNQHKGIITETEAYIGQDDQAAHSFHGYTKRTAVMFGNPGFSYVYLIYGMYHCLNVVTEPEGFPAAILIRSIILLSKNTPHTKVNGPGKICKILHITKEHNNIDMTANHSFCICDTNLNIDDYICTPRIGISKATDKFWRLVIPNVTSLQYIDTKLVCTLT.

Belongs to the DNA glycosylase MPG family.

The sequence is that of Putative 3-methyladenine DNA glycosylase from Ehrlichia ruminantium (strain Gardel).